The chain runs to 618 residues: Protein polyglycylase TTLL10 (618 aa).

The interval 1–76 is disordered; it reads MGSSQEEGLP…GLLLGDGKPS (76 aa). Low complexity predominate over residues 57–74; sequence ATGPPAALLEGLLLGDGK. The TTL domain occupies 82–479; it reads PGPFFYIGGN…TFQKSLRGQK (398 aa). ATP contacts are provided by residues Lys-240, 246–247, 289–292, 302–304, and 345–346; these read QG, QRYI, KFD, and TN. Gln-246 lines the a protein pocket. Mg(2+) is bound by residues Asp-425, Glu-438, and Asn-440. Residues 503-618 are disordered; that stretch reads LGGSCSLRRR…PATLPAFRDL (116 aa). Residues 539–557 are compositionally biased toward pro residues; that stretch reads PVPPPLAPQRPQLPGPSPD. A compositionally biased stretch (basic and acidic residues) spans 585–594; it reads AKEEREEPEN.

Requires Mg(2+) as cofactor.

The protein resides in the cytoplasm. It localises to the cytoskeleton. The protein localises to the cell projection. It is found in the cilium. Its subcellular location is the cilium axoneme. It catalyses the reaction (glycyl)(n)-glycyl-L-glutamyl-[protein] + glycine + ATP = (glycyl)(n+1)-glycyl-L-glutamyl-[protein] + ADP + phosphate + H(+). Polyglycylase which modifies both tubulin and non-tubulin proteins, generating polyglycine side chains of variable lengths on the gamma-carboxyl groups of specific glutamate residues of target proteins. Involved in the elongation step rather than the initiation step of the polyglycylation reaction. Polyglycylates alpha-tubulin and beta-tubulin. Polyglycylates non-tubulin proteins such as nucleosome assembly protein NAP1. In Macaca fascicularis (Crab-eating macaque), this protein is Protein polyglycylase TTLL10 (TTLL10).